Consider the following 426-residue polypeptide: Endothelin-1 receptor (426 aa).

The signal sequence occupies residues 1 to 20; sequence METFCLKVTFWVALVGYVIG. The Extracellular segment spans residues 21–79; the sequence is DHPESYSTNLSTPVDFTTFHGTELSFLVTTHRPTNLALPSNGSMHSYCPQQTKITSAFK. N-linked (GlcNAc...) asparagine glycosylation is found at N29 and N61. A helical membrane pass occupies residues 80-101; it reads YINTVISCTIFIVGMVGNATLL. The Cytoplasmic portion of the chain corresponds to 102–111; the sequence is RIIYQNKCMR. Residues 112–131 traverse the membrane as a helical segment; it reads NGPNALIASLALGDLIYVVI. At 132 to 158 the chain is on the extracellular side; the sequence is DLPINVFKLLAGRWPFDHNDFGVFLCK. Cysteines 157 and 238 form a disulfide. A helical membrane pass occupies residues 159 to 180; it reads LFPFLQKSSVGITVLNLCALSV. Topologically, residues 181–204 are cytoplasmic; sequence DRYRAVASWSRVQGIGIPLITAIE. A helical transmembrane segment spans residues 205–228; the sequence is IVSIWILSFILAIPEAIGFVMVPF. Residues 229 to 255 are Extracellular-facing; it reads EYKGEQHKTCMLNATSKFMEFYQDVKD. N-linked (GlcNAc...) asparagine glycosylation is present at N241. A helical membrane pass occupies residues 256–277; that stretch reads WWLFGFYFCMPLVCTAIFYTLM. Over 278–305 the chain is Cytoplasmic; that stretch reads TCEMLNRRNGSLRIALSEHLKQRREVAK. The helical transmembrane segment at 306–327 threads the bilayer; sequence TVFCLVVIFALCWFPLHLSRIL. Residues 328–346 are Extracellular-facing; it reads KKTVYDEMDKNRCELLSFL. Residues 347 to 371 traverse the membrane as a helical segment; that stretch reads RLMDYIGINLATMNSCINPIALYFV. Over 372-426 the chain is Cytoplasmic; it reads SKKFKNCFQSCLCCCCYQSKSLMTSVPMNGTSIQWKNHEQNNHNTERSSHKDSIN. Residue S424 is modified to Phosphoserine.

It belongs to the G-protein coupled receptor 1 family. Endothelin receptor subfamily. EDNRA sub-subfamily. Interacts with HDAC7 and KAT5.

Its subcellular location is the cell membrane. Receptor for endothelin-1. Mediates its action by association with G proteins that activate a phosphatidylinositol-calcium second messenger system. The rank order of binding affinities for ET-A is: ET1 &gt; ET2 &gt;&gt; ET3. This chain is Endothelin-1 receptor, found in Canis lupus familiaris (Dog).